A 155-amino-acid polypeptide reads, in one-letter code: 3-dehydroquinate dehydratase (155 aa).

Tyr31 serves as the catalytic Proton acceptor. Substrate is bound by residues Asn83, His89, and Asp96. Residue His109 is the Proton donor of the active site. Substrate contacts are provided by residues 110–111 (LS) and Arg120.

It belongs to the type-II 3-dehydroquinase family. Homododecamer.

The catalysed reaction is 3-dehydroquinate = 3-dehydroshikimate + H2O. Its pathway is metabolic intermediate biosynthesis; chorismate biosynthesis; chorismate from D-erythrose 4-phosphate and phosphoenolpyruvate: step 3/7. Functionally, catalyzes a trans-dehydration via an enolate intermediate. The polypeptide is 3-dehydroquinate dehydratase (Laribacter hongkongensis (strain HLHK9)).